The primary structure comprises 87 residues: Large ribosomal subunit protein bL27c (87 aa).

Residues 1–20 (MAHKKGSGSTKNGRDSRSQR) are disordered.

It belongs to the bacterial ribosomal protein bL27 family.

The protein localises to the plastid. The protein resides in the chloroplast. The chain is Large ribosomal subunit protein bL27c from Gracilaria tenuistipitata var. liui (Red alga).